The primary structure comprises 93 residues: MAQLLSDVEIQSQASKLSGWTLEGSKLQTTRKFKDFIEAIAFVNKLVEPAESAGHHPDIEISYNKVKVTLTTHDAGGLTQKDFDVAATISQIN.

It belongs to the pterin-4-alpha-carbinolamine dehydratase family.

The catalysed reaction is (4aS,6R)-4a-hydroxy-L-erythro-5,6,7,8-tetrahydrobiopterin = (6R)-L-erythro-6,7-dihydrobiopterin + H2O. This chain is Putative pterin-4-alpha-carbinolamine dehydratase, found in Nostoc sp. (strain PCC 7120 / SAG 25.82 / UTEX 2576).